A 129-amino-acid chain; its full sequence is MYDNLKSLGVNHPDDIDRYSLRQEANNDILKIYFRRDKGELFAKSVKFKYPRQRKTVVSYNAAEGYREINGISPNLRYVIDELDQICLRDQTEVDLKNKILDDLRHLESVVSNKIAEIEADLEKLTRQK.

Belongs to the UPF0325 family.

The protein is UPF0325 protein SG1947 of Sodalis glossinidius (strain morsitans).